The sequence spans 287 residues: Ribosomal RNA small subunit methyltransferase I (287 aa).

It belongs to the methyltransferase superfamily. RsmI family.

Its subcellular location is the cytoplasm. The enzyme catalyses cytidine(1402) in 16S rRNA + S-adenosyl-L-methionine = 2'-O-methylcytidine(1402) in 16S rRNA + S-adenosyl-L-homocysteine + H(+). In terms of biological role, catalyzes the 2'-O-methylation of the ribose of cytidine 1402 (C1402) in 16S rRNA. The sequence is that of Ribosomal RNA small subunit methyltransferase I from Streptococcus pyogenes serotype M1.